The following is a 485-amino-acid chain: Sulfated surface glycoprotein 185 (485 aa).

The N-terminal stretch at 1–20 (MSKLLLVALFGAIAVVATSA) is a signal peptide. Asparagine 193 is a glycosylation site (N-linked (GlcNAc...) asparagine). The tract at residues 212-317 (LSGPNVNPIG…PPVPPPPSPP (106 aa)) is disordered. Composition is skewed to pro residues over residues 221–234 (GPAP…PSPQ) and 241–317 (PPSP…PSPP). Asparagine 347 carries an N-linked (GlcNAc...) asparagine glycan.

As to quaternary structure, polymer. Intersubunit cross-links are formed between saccharide chains rather than between polypeptide chains. In terms of processing, hydroxylated on proline residues in the Pro-rich central domain. Post-translationally, glycosylated; contains sulfate-substituted glycans.

Functionally, the extracellular matrix (ECM) of Volvox contains insoluble fibrous layers that surround individual cells at a distance to form contiguous cellular compartments. SSG 185 is the monomeric precursor of this substructure (C3Z structure). This Volvox carteri (Green alga) protein is Sulfated surface glycoprotein 185.